We begin with the raw amino-acid sequence, 1323 residues long: Clustered mitochondria protein homolog (1323 aa).

The stretch at 103-141 (KEKPYNLAAIYDHLNKFREVIGLHFLDKYSSEVGVLSGV) is one TPR 1 repeat. Residues 149–186 (LQDVKETEPETQDDKDKETDETKSTKEDSNQTEEKKSE) are disordered. Basic and acidic residues predominate over residues 150 to 186 (QDVKETEPETQDDKDKETDETKSTKEDSNQTEEKKSE). One can recognise a Clu domain in the interval 351 to 608 (FANQPDASRS…RATPLDIEFI (258 aa)). Residues 530–563 (CYGLSTDGSKIFSDSSFENVLKPIAEAFHLKPHP) form a TPR 2 repeat. A compositionally biased stretch (basic and acidic residues) spans 764–801 (NEEEISKRKEESEKKATEGKDQDKEEEKANDNEKNKED). Residues 764–808 (NEEEISKRKEESEKKATEGKDQDKEEEKANDNEKNKEDDKEEVSN) form a disordered region. TPR repeat units follow at residues 1042 to 1076 (LSVY…KSEA), 1099 to 1132 (ITAY…WTLV), 1141 to 1174 (VNTY…STKL), and 1183 to 1216 (GMLR…FTKF). The tract at residues 1250-1323 (KALAQQASAS…KKSNNKKSKK (74 aa)) is disordered. Positions 1308 to 1323 (PKKQLKKKSNNKKSKK) are enriched in basic residues.

It belongs to the CLU family. As to quaternary structure, may associate with the eukaryotic translation initiation factor 3 (eIF-3) complex.

The protein localises to the cytoplasm. Functionally, mRNA-binding protein involved in proper cytoplasmic distribution of mitochondria. The protein is Clustered mitochondria protein homolog of Debaryomyces hansenii (strain ATCC 36239 / CBS 767 / BCRC 21394 / JCM 1990 / NBRC 0083 / IGC 2968) (Yeast).